Reading from the N-terminus, the 316-residue chain is 4-hydroxy-3-methylbut-2-enyl diphosphate reductase (316 aa).

Cysteine 12 contributes to the [4Fe-4S] cluster binding site. The (2E)-4-hydroxy-3-methylbut-2-enyl diphosphate site is built by histidine 41 and histidine 74. Positions 41 and 74 each coordinate dimethylallyl diphosphate. Isopentenyl diphosphate-binding residues include histidine 41 and histidine 74. [4Fe-4S] cluster is bound at residue cysteine 96. Histidine 124 serves as a coordination point for (2E)-4-hydroxy-3-methylbut-2-enyl diphosphate. Histidine 124 contacts dimethylallyl diphosphate. Position 124 (histidine 124) interacts with isopentenyl diphosphate. Glutamate 126 functions as the Proton donor in the catalytic mechanism. Residue threonine 169 coordinates (2E)-4-hydroxy-3-methylbut-2-enyl diphosphate. Residue cysteine 199 participates in [4Fe-4S] cluster binding. Residues serine 227, serine 228, asparagine 229, and serine 271 each contribute to the (2E)-4-hydroxy-3-methylbut-2-enyl diphosphate site. The dimethylallyl diphosphate site is built by serine 227, serine 228, asparagine 229, and serine 271. 4 residues coordinate isopentenyl diphosphate: serine 227, serine 228, asparagine 229, and serine 271.

The protein belongs to the IspH family. The cofactor is [4Fe-4S] cluster.

The enzyme catalyses isopentenyl diphosphate + 2 oxidized [2Fe-2S]-[ferredoxin] + H2O = (2E)-4-hydroxy-3-methylbut-2-enyl diphosphate + 2 reduced [2Fe-2S]-[ferredoxin] + 2 H(+). It catalyses the reaction dimethylallyl diphosphate + 2 oxidized [2Fe-2S]-[ferredoxin] + H2O = (2E)-4-hydroxy-3-methylbut-2-enyl diphosphate + 2 reduced [2Fe-2S]-[ferredoxin] + 2 H(+). Its pathway is isoprenoid biosynthesis; dimethylallyl diphosphate biosynthesis; dimethylallyl diphosphate from (2E)-4-hydroxy-3-methylbutenyl diphosphate: step 1/1. The protein operates within isoprenoid biosynthesis; isopentenyl diphosphate biosynthesis via DXP pathway; isopentenyl diphosphate from 1-deoxy-D-xylulose 5-phosphate: step 6/6. Catalyzes the conversion of 1-hydroxy-2-methyl-2-(E)-butenyl 4-diphosphate (HMBPP) into a mixture of isopentenyl diphosphate (IPP) and dimethylallyl diphosphate (DMAPP). Acts in the terminal step of the DOXP/MEP pathway for isoprenoid precursor biosynthesis. This is 4-hydroxy-3-methylbut-2-enyl diphosphate reductase from Xylella fastidiosa (strain M23).